The chain runs to 304 residues: uncharacterized protein (304 aa).

The next 10 helical transmembrane spans lie at 5–25, 42–62, 68–88, 96–116, 120–140, 150–170, 178–198, 215–235, 245–265, and 268–288; these read TIIL…FIAI, FLLA…PLLF, IFQL…ILYG, IASV…FIFF, LYFF…IILF, TIKG…IYLY, ISIL…FLVI, ILAT…SYFY, ASTI…FVWG, and IGID…ITIF. EamA domains follow at residues 16–140 and 162–288; these read ITWG…IILF and TSHA…ITIF.

Belongs to the EamA transporter family.

The protein resides in the cell membrane. This is an uncharacterized protein from Buchnera aphidicola subsp. Schlechtendalia chinensis.